The chain runs to 279 residues: MAVVTMRQLLESGVHFGHQTRRWNPKMKRFIFTERNGIYIIDLRQTLDYIEKAYDFVRGTVAEGGSILFVGTKKQAQEAIAEQATRVGQPYVNHRWLGGMLTNFQTVYKRLQRMKELEALGDLSGTAAGYTKKETLQLSREKEKLSRTLGGLRDMQKLPAAIWVVDTKKEHIAVDEARKLGIPVIAVLDTNCDPDEVDYPIPGNDDAIRSAELLTKVVAAAVADGLIARSGRRRGTDEKPEAGVASDEPLAEWERELLEEPKKSDEPKSDEQPAAAAAE.

Residues 232-279 (RRRGTDEKPEAGVASDEPLAEWERELLEEPKKSDEPKSDEQPAAAAAE) form a disordered region. A compositionally biased stretch (basic and acidic residues) spans 252 to 271 (EWERELLEEPKKSDEPKSDE).

The protein belongs to the universal ribosomal protein uS2 family.

The sequence is that of Small ribosomal subunit protein uS2 from Salinispora arenicola (strain CNS-205).